Here is a 126-residue protein sequence, read N- to C-terminus: Small ribosomal subunit protein uS13 (126 aa).

A disordered region spans residues 96–126; sequence LPVRGQQTKTNARTRKGRRKGTVANKKKVSK. Residues 107–126 show a composition bias toward basic residues; sequence ARTRKGRRKGTVANKKKVSK.

The protein belongs to the universal ribosomal protein uS13 family. As to quaternary structure, part of the 30S ribosomal subunit. Forms a loose heterodimer with protein S19. Forms two bridges to the 50S subunit in the 70S ribosome.

In terms of biological role, located at the top of the head of the 30S subunit, it contacts several helices of the 16S rRNA. In the 70S ribosome it contacts the 23S rRNA (bridge B1a) and protein L5 of the 50S subunit (bridge B1b), connecting the 2 subunits; these bridges are implicated in subunit movement. Contacts the tRNAs in the A and P-sites. This chain is Small ribosomal subunit protein uS13, found in Hydrogenobaculum sp. (strain Y04AAS1).